The sequence spans 273 residues: HLA class II histocompatibility antigen, DO beta chain (273 aa).

The N-terminal stretch at 1–26 (MGSGWVPWVVALLVNLTRLDSSMTQG) is a signal peptide. Residues 27–120 (TDSPEDFVIQ…LGAPFTVGRK (94 aa)) form a beta-1 region. Residues 27–224 (TDSPEDFVIQ…RAQSEYSWRK (198 aa)) lie on the Extracellular side of the membrane. Intrachain disulfides connect C41–C105 and C143–C199. N45 carries an N-linked (GlcNAc...) asparagine glycan. The segment at 121-214 (VQPEVTVYPE…SLLSPVSVEW (94 aa)) is beta-2. Positions 123–213 (PEVTVYPERT…SSLLSPVSVE (91 aa)) constitute an Ig-like C1-type domain. The connecting peptide stretch occupies residues 215-224 (RAQSEYSWRK). The chain crosses the membrane as a helical span at residues 225 to 245 (MLSGIAAFLLGLIFLLVGIVI). Topologically, residues 246 to 273 (QLRAQKGYVRTQMSGNEVSRAVLLPQSC) are cytoplasmic.

Belongs to the MHC class II family. Heterodimer of an alpha chain (DOA) and a beta chain (DOB). Forms a heterotetrameric complex with an HLA-DM molecule during intracellular transport in endosomal/lysosomal compartments in B-cells.

Its subcellular location is the endosome membrane. It is found in the lysosome membrane. Important modulator in the HLA class II restricted antigen presentation pathway by interaction with the HLA-DM molecule in B-cells. Modifies peptide exchange activity of HLA-DM. In Homo sapiens (Human), this protein is HLA class II histocompatibility antigen, DO beta chain (HLA-DOB).